We begin with the raw amino-acid sequence, 120 residues long: UPF0231 protein YE0706 (120 aa).

It belongs to the UPF0231 family.

In Yersinia enterocolitica serotype O:8 / biotype 1B (strain NCTC 13174 / 8081), this protein is UPF0231 protein YE0706.